The following is a 210-amino-acid chain: 3-hexulose-6-phosphate synthase (210 aa).

It belongs to the HPS/KGPDC family. HPS subfamily.

It catalyses the reaction D-ribulose 5-phosphate + formaldehyde = D-arabino-hex-3-ulose 6-phosphate. Its pathway is one-carbon metabolism; formaldehyde assimilation via RuMP pathway; D-fructose 6-phosphate from D-ribulose 5-phosphate and formaldehyde: step 1/2. Functionally, catalyzes the condensation of ribulose 5-phosphate with formaldehyde to form 3-hexulose 6-phosphate. The chain is 3-hexulose-6-phosphate synthase from Staphylococcus haemolyticus (strain JCSC1435).